The primary structure comprises 376 residues: Light-dependent chlorophyll f synthase (376 aa).

The disordered stretch occupies residues 1–22; that stretch reads MKLESDHVIATSDSSDYTSEPT. A compositionally biased stretch (polar residues) spans 11 to 22; sequence TSDSSDYTSEPT. The next 5 membrane-spanning stretches (helical) occupy residues 51 to 68, 140 to 155, 164 to 178, 219 to 240, and 298 to 312; these read YVGWFGVLMIPCVLTAAT, HFLIGIIAYQDREWEL, WISLAFTAPVAASVS, LHQLGVIGVLGGAFAAAMHGSL, and FLAALPVAGIWSAAL. H140 serves as a coordination point for a chlorophyll. Position 220 (H220) interacts with a chlorophyll.

It belongs to the reaction center PufL/M/PsbA/D family. Homodimer.

The protein localises to the cellular thylakoid membrane. Its function is as follows. Synthesizes chlorophyll f or chlorophyllide f (Chl f, 2-formyl chlorophyll a), probably by oxidation of chlorophyll a or chlorophyllide a and reduction of plastoquinone. The reaction is probably light-dependent. Chl f absorbs far red light (FRL, 707 nm in 100% methanol), and is synthesized when cells are grown in FRL, where it provides the advantage of extending the spectral range of harvested light in terrestrial cyanobacteria. When ectopically expressed in Synechococcus PCC 7002 (which does not grow in FRL and does not make Chl f) produces Chl f (0.059% of total chlorophyll). In Chlorogloeopsis fritschii (strain PCC 9212), this protein is Light-dependent chlorophyll f synthase.